The primary structure comprises 416 residues: Iron/alpha-ketoglutarate-dependent dioxygenase asqJ (416 aa).

A disordered region spans residues 1 to 53; the sequence is MGYPKAFTSSDSEPEPDLSRDLGNPVMGNPGVVSRSSSTVAQHSVRNNPTGPD. Over residues 34-50 the composition is skewed to polar residues; it reads SRSSSTVAQHSVRNNPT. 3 residues coordinate Fe cation: H242, D244, and H319.

It belongs to the PhyH family. In terms of assembly, homodimer. The cofactor is Fe cation.

The catalysed reaction is (-)-4'-methoxycyclopeptine + 2-oxoglutarate + O2 = (Z)-4'-methoxydehydrocyclopeptine + succinate + CO2 + H2O. It carries out the reaction (Z)-4'-methoxydehydrocyclopeptine + 2-oxoglutarate + O2 = (-)-4'-methoxycyclopenine + succinate + CO2. The enzyme catalyses (-)-cyclopeptine + 2-oxoglutarate + O2 = (Z)-dehydrocyclopeptine + succinate + CO2 + H2O. It catalyses the reaction (Z)-dehydrocyclopeptine + 2-oxoglutarate + O2 = (-)-cyclopenine + succinate + CO2. Its pathway is secondary metabolite biosynthesis. It functions in the pathway alkaloid biosynthesis. It participates in mycotoxin biosynthesis. Iron/alpha-ketoglutarate-dependent dioxygenase; part of the gene cluster that mediates the biosynthesis of the aspoquinolone mycotoxins. Within the pathway, the iron/alpha-ketoglutarate-dependent dioxygenase asqJ acts as a (-)-cyclopenine synthase that converts 4'-methoxycyclopeptin into 4'-methoxydehydrocyclopeptin through dehydrogenation to form a double bond between C-alpha and C-beta of the O-methyltyrosine side chain. AsqJ is a very unique dioxygenase which is capable of catalyzing radical-mediated dehydrogenation and epoxidation reactions sequentially on a 6,7-benzo-diazepinedione substrate in the 4'-methoxyviridicatin biosynthetic pathway. AsqJ is also capable of converting cyclopeptin into dehydrocyclopeptin. The first step of the pathway is catalyzed by the nonribosomal peptide synthetase asqK that condenses anthranilic acid and O-methyl-L-tyrosine to produce 4'-methoxycyclopeptin. 4'-methoxycyclopeptin is then converted to 4'-methoxydehydrocyclopeptin by the ketoglutarate-dependent dioxygenase asqJ. AsqJ also converts its first product 4'-methoxydehydrocyclopeptin to 4'-methoxycyclopenin. The following conversion of 4'-methoxycyclopenin into 4'-methoxyviridicatin is catalyzed by the cyclopenase asqI. 4'-methoxyviridicatin is the precursor of quinolone natural products, and is further converted to quinolinone B. The prenyltransferase asqH1 then catalyzes the canonical Friedel-Crafts alkylation of quinolinone B with dimethylallyl cation to yield dimethylallyl quinolone, which is subjected to FAD-dependent dehydrogenation by the FAD-linked oxidoreductase asqF to yield conjugated aryl diene. The delta(3') double bond then serves as the site of the second alkylation with DMAPP catalyzed by the prenyltransferase asqH2 to yield a carbenium ion intermediate, which can be attacked by H(2)O to yield a styrenyl quinolone containing a C3'-hydroxyprenyl chain. The FAD-dependent monooxygenase asqG performs epoxidation of the terminal C7'-C8' olefin. Finally, after dehydratation of the epoxide at C3 by asqC, the quinolone epoxide rearrangement protein asqO catalyzes an enzymatic 3-exo-tet cyclization to yield the cyclopropyl-THF ring system in aspoquinolone. In Emericella nidulans (strain FGSC A4 / ATCC 38163 / CBS 112.46 / NRRL 194 / M139) (Aspergillus nidulans), this protein is Iron/alpha-ketoglutarate-dependent dioxygenase asqJ.